The sequence spans 485 residues: MERPALLQNGEIGTMESPTTRLASKPFPKPFSIESLIANQTPATATPPSPPEERDQEQEAEQEQELSARAMVASSALGLTQFPLYNPWLHGYFAQNHERLTHLIAGGCYLPSSPAGHPAAQQPQAQAQPQPPPPHPPTHALEKQLPPTLPHPLDTRFLPFNPAAAGVAPTDLSYRRLAELMNQDYVHSLSVHARLQHMAAAGRMHEDQANPGMAQLQEPTPPQAHSSPAKSGSHSPMEPALDVGMDEDFECSGDSCSDISLTMSPRNYNGEMDKSRNGAYTNSDSEDCSDDEGAQSRHEGGGMGGKDSQGNGSSSNSKSRRRRTAFTSEQLLELEREFHAKKYLSLTERSQIATSLKLSEVQVKIWFQNRRAKWKRVKAGLTSHGLGRNGTTSGTKIVVPIPVHVNRFAVRSQHQQLEKMCLSGPKPDLRKKLSAEAIGGFEKFSGSTNASSPSGGPVGLGVGVGVGVGVGLGVSTPLSLARSIY.

3 disordered regions span residues 1 to 65, 114 to 157, and 212 to 325; these read MERP…QEQE, PAGH…DTRF, and GMAQ…RRTA. Over residues 54–64 the composition is skewed to acidic residues; sequence RDQEQEAEQEQ. Low complexity predominate over residues 114-128; the sequence is PAGHPAAQQPQAQAQ. 2 stretches are compositionally biased toward polar residues: residues 223–234 and 254–267; these read QAHSSPAKSGSH and DSCS…SPRN. The span at 284-293 shows a compositional bias: acidic residues; sequence DSEDCSDDEG. Residues 308-317 show a composition bias toward low complexity; it reads SQGNGSSSNS. Positions 319 to 378 form a DNA-binding region, homeobox; that stretch reads SRRRRTAFTSEQLLELEREFHAKKYLSLTERSQIATSLKLSEVQVKIWFQNRRAKWKRVK.

As to expression, expressed in the neuroectodermal and mesectodermal cells at the ventral midline of stage 8 embryos, Subsequently, expression domains in the CNS widen and have their most anterior border in the posterior deutocerebrum. Oc/otd and unpg are mutual repressors at the interface of their brain-specific expression domains. Expression fades during germ band retraction and is then restricted to subset of cells by stage 14. Expressed in the founder cells of the cerebral branch within the first tracheal metamere. Outside the CNS, expression is seen in two clusters of ectodermal cells located laterally within the labial and first thoracic segments of stage 9 embryos. By stage 13, the expression is detected in a few cells close to the dorsal midline of the embryos.

It is found in the nucleus. In terms of biological role, plays a regulatory role in neural branching of the tracheae: segment-specific aspects of these neural branching patterns appear to be generated by homeotic regulation of expression. May have a role with oc/otd in the postembryonic development of the brain. This chain is Homeobox protein unplugged, found in Drosophila melanogaster (Fruit fly).